The chain runs to 517 residues: Crotonobetaine/carnitine--CoA ligase (517 aa).

Belongs to the ATP-dependent AMP-binding enzyme family.

The enzyme catalyses 4-(trimethylamino)butanoate + ATP + CoA = 4-(trimethylamino)butanoyl-CoA + AMP + diphosphate. It carries out the reaction crotonobetaine + ATP + CoA = crotonobetainyl-CoA + AMP + diphosphate. The catalysed reaction is (R)-carnitine + ATP + CoA = (R)-carnitinyl-CoA + AMP + diphosphate. It functions in the pathway amine and polyamine metabolism; carnitine metabolism. Catalyzes the transfer of CoA to carnitine, generating the initial carnitinyl-CoA needed for the CaiB reaction cycle. Also has activity toward crotonobetaine and gamma-butyrobetaine. The sequence is that of Crotonobetaine/carnitine--CoA ligase from Salmonella choleraesuis (strain SC-B67).